Reading from the N-terminus, the 114-residue chain is MAEITSAKAMARTVRVSPRKSRLILDNIRGKNVADAIAILKFTPNKAAGIIEKVLNSAIANAENNFGLEKANLVVSEAFANEGPTMKRFRPRAKGSASPINKRTSHITVVVAEK.

It belongs to the universal ribosomal protein uL22 family. In terms of assembly, part of the 50S ribosomal subunit.

This protein binds specifically to 23S rRNA; its binding is stimulated by other ribosomal proteins, e.g. L4, L17, and L20. It is important during the early stages of 50S assembly. It makes multiple contacts with different domains of the 23S rRNA in the assembled 50S subunit and ribosome. In terms of biological role, the globular domain of the protein is located near the polypeptide exit tunnel on the outside of the subunit, while an extended beta-hairpin is found that lines the wall of the exit tunnel in the center of the 70S ribosome. The chain is Large ribosomal subunit protein uL22 from Streptococcus gordonii (strain Challis / ATCC 35105 / BCRC 15272 / CH1 / DL1 / V288).